We begin with the raw amino-acid sequence, 128 residues long: Large ribosomal subunit protein bL12 (128 aa).

The protein belongs to the bacterial ribosomal protein bL12 family. As to quaternary structure, homodimer. Part of the ribosomal stalk of the 50S ribosomal subunit. Forms a multimeric L10(L12)X complex, where L10 forms an elongated spine to which 2 to 4 L12 dimers bind in a sequential fashion. Binds GTP-bound translation factors.

Functionally, forms part of the ribosomal stalk which helps the ribosome interact with GTP-bound translation factors. Is thus essential for accurate translation. This is Large ribosomal subunit protein bL12 from Desulfovibrio desulfuricans (strain ATCC 27774 / DSM 6949 / MB).